The following is a 184-amino-acid chain: Interferon alpha-1 (184 aa).

The first 23 residues, 1–23 (MALPVSLLMALVVLSCHSICSLG), serve as a signal peptide directing secretion. Disulfide bonds link C24-C122 and C52-C162.

It belongs to the alpha/beta interferon family. As to quaternary structure, interacts with CR2.

Its subcellular location is the secreted. In terms of biological role, produced by macrophages, IFN-alpha have antiviral activities. Interferon stimulates the production of two enzymes: a protein kinase and an oligoadenylate synthetase. In Equus caballus (Horse), this protein is Interferon alpha-1.